Here is a 221-residue protein sequence, read N- to C-terminus: UPF0758 protein ECA0145 (221 aa).

One can recognise an MPN domain in the interval 99–221 (AMLNPEATGQ…FVSFAERGWI (123 aa)). H170, H172, and D183 together coordinate Zn(2+). Positions 170–183 (HNHPSGKAEPSQAD) match the JAMM motif motif.

The protein belongs to the UPF0758 family. YicR subfamily.

The protein is UPF0758 protein ECA0145 of Pectobacterium atrosepticum (strain SCRI 1043 / ATCC BAA-672) (Erwinia carotovora subsp. atroseptica).